The following is a 78-amino-acid chain: Large ribosomal subunit protein bL28 (78 aa).

Belongs to the bacterial ribosomal protein bL28 family.

The protein is Large ribosomal subunit protein bL28 of Thermosynechococcus vestitus (strain NIES-2133 / IAM M-273 / BP-1).